We begin with the raw amino-acid sequence, 757 residues long: Two pore calcium channel protein 1 (757 aa).

Topologically, residues 1–94 (MRERGEMREA…NDTRFERAMR (94 aa)) are cytoplasmic. The tract at residues 24-48 (HSHGSGSSGTGSHTSGGGGGWRGSR) is disordered. Gly residues predominate over residues 29–45 (GSSGTGSHTSGGGGGWR). A helical membrane pass occupies residues 95–115 (FYFVYLRLDWLWSLNLFALIL). The Extracellular portion of the chain corresponds to 116–152 (LNFLEKPLWCRGYSQHACDQRDLYFLGQLPYLSKTES). The chain crosses the membrane as a helical span at residues 153-173 (LIYEGLTLVILVMDIFYPLSY). Over 174 to 188 (EGLNLFWKNTINKLK) the chain is Cytoplasmic. The helical transmembrane segment at 189–209 (VLLLFILACDILVFAFSPQPF) threads the bilayer. Position 210 (Arg210) is a topological domain, extracellular. Residues 211–228 (VAPYIRVAFLIMNIRELR) traverse the membrane as a helical; Voltage-sensor segment. Residues 229–233 (MCAVT) lie on the Cytoplasmic side of the membrane. The helical transmembrane segment at 234 to 254 (LVGMVGTYLNVLALSLLFLLF) threads the bilayer. The Extracellular portion of the chain corresponds to 255–270 (ASWLAYVTFEDTPQGK). The pore-forming intramembrane region spans 271 to 285 (TVFSSYGTTLYQMFI). Residues 286–308 (LFTTSNNPDVWVPAYKSSRWSSL) are Extracellular-facing. The helical transmembrane segment at 309 to 329 (FFIVYVLLGVYFLTNLILAVI) threads the bilayer. The Cytoplasmic portion of the chain corresponds to 330-453 (YDSFKEQLAK…LCEWLKSFVR (124 aa)). EF-hand domains are found at residues 347–382 (TRKS…LNKY) and 388–423 (TSRE…IAIK). Residues 454–474 (SPLFEYIVIFVLLMNLVAVII) traverse the membrane as a helical segment. At 475–493 (ETTLDIENSSSQKVWQEVE) the chain is on the extracellular side. The N-linked (GlcNAc...) asparagine glycan is linked to Asn482. A helical membrane pass occupies residues 494-514 (FVFGWIYVIEMALKIFSLGFG). Residues 515 to 523 (AYWMEGQNK) are Cytoplasmic-facing. A helical membrane pass occupies residues 524 to 544 (FDFVLTWTIFIGETLTFAFPS). At 545 to 553 (KLSFLSNGE) the chain is on the extracellular side. A helical; Voltage-sensor membrane pass occupies residues 554–571 (WIRYLLLGRMLRLTRILL). The Cytoplasmic portion of the chain corresponds to 572-595 (QVRRFRAFVATFFTLMSSLMPYLG). Residues 596–616 (IVFCTLCIYCSLGLQIFGGIV) form a helical membrane-spanning segment. The Extracellular portion of the chain corresponds to 617–640 (YAGNPTLEETDLFSNDYLLFNFND). An intramembrane region (pore-forming) is located at residues 641–655 (YPSGMVTLFNLLVMG). Residues 656–676 (NWQAWMESYRQLTGSYWSLIY) are Extracellular-facing. The chain crosses the membrane as a helical span at residues 677–697 (FVSFYLISVLLLLNLIVAFVL). Residues 698 to 757 (EAFFAEMELEKDGEADIQDPTLEGRNRRRSVRVRTKGTMVDILLHHMLSNELDGSQNRDQ) are Cytoplasmic-facing.

Belongs to the calcium channel alpha-1 subunit (TC 1.A.1.11) family. Two pore calcium channel subfamily. As to quaternary structure, homodimer. Expressed in shoot, mature leaf, cultured cells, and at lower level in roots.

It is found in the membrane. With respect to regulation, inhibited by the VDCC blocker verapamil in yeast cells. Channel activity may be down-regulated by cytosolic Ca(2+) in rice cells. Inhibited by Al(3+). Its function is as follows. May function as one of the major voltage-gated Ca(2+) channel (VDCC) across the plasma membrane. May be involved in the regulation of cytosolic Ca(2+) and in growth and development. Acts as the major ROS-responsive Ca(2+) channel and is the possible target of Al-dependent inhibition. Determines sensitivity to T.viride xylanase elicitor. Plays a regulatory role in elicitor-induced defense responses and hypersensitive cell death. This Oryza sativa subsp. japonica (Rice) protein is Two pore calcium channel protein 1 (TPC1).